Consider the following 263-residue polypeptide: Hydroxyethylthiazole kinase 1 (263 aa).

M42 provides a ligand contact to substrate. K118 and T164 together coordinate ATP. G191 contributes to the substrate binding site.

Belongs to the Thz kinase family. The cofactor is Mg(2+).

It catalyses the reaction 5-(2-hydroxyethyl)-4-methylthiazole + ATP = 4-methyl-5-(2-phosphooxyethyl)-thiazole + ADP + H(+). It participates in cofactor biosynthesis; thiamine diphosphate biosynthesis; 4-methyl-5-(2-phosphoethyl)-thiazole from 5-(2-hydroxyethyl)-4-methylthiazole: step 1/1. Functionally, catalyzes the phosphorylation of the hydroxyl group of 4-methyl-5-beta-hydroxyethylthiazole (THZ). The protein is Hydroxyethylthiazole kinase 1 of Clostridium botulinum (strain Langeland / NCTC 10281 / Type F).